The primary structure comprises 385 residues: Iron uptake system component EfeM (385 aa).

A signal peptide spans 1-22; it reads MNFTKIAVSAGCILALCAGCGA.

It belongs to the EfeM/EfeO family. Component of the iron transporter efeUOB/M complex composed of EfeU, EfeM and EfeB; EfeU is essential for the complex formation.

The protein localises to the cell membrane. It localises to the membrane raft. Its function is as follows. Part of the iron transporter system efeUOB/M involved in iron import. Specifically binds Fe(3+), which is produced by EfeB-mediated oxidation of Fe(2+), and delivers it to the cell membrane permease EfeU. The protein is Iron uptake system component EfeM of Bacillus subtilis (strain 168).